A 423-amino-acid polypeptide reads, in one-letter code: Glutamyl-tRNA(Gln) amidotransferase subunit A (423 aa).

Residues Lys-28 and Ser-103 each act as charge relay system in the active site. Ser-127 acts as the Acyl-ester intermediate in catalysis.

This sequence belongs to the amidase family. GatA subfamily. In terms of assembly, heterotrimer of A, B and C subunits.

It catalyses the reaction L-glutamyl-tRNA(Gln) + L-glutamine + ATP + H2O = L-glutaminyl-tRNA(Gln) + L-glutamate + ADP + phosphate + H(+). Its function is as follows. Allows the formation of correctly charged Gln-tRNA(Gln) through the transamidation of misacylated Glu-tRNA(Gln) in organisms which lack glutaminyl-tRNA synthetase. The reaction takes place in the presence of glutamine and ATP through an activated gamma-phospho-Glu-tRNA(Gln). This Halobacterium salinarum (strain ATCC 700922 / JCM 11081 / NRC-1) (Halobacterium halobium) protein is Glutamyl-tRNA(Gln) amidotransferase subunit A.